The following is a 546-amino-acid chain: Probable E3 ubiquitin-protein ligase NGR_a03640 (546 aa).

Residues 1 to 70 (MNVQRPGLAV…RPWEGRPQEA (70 aa)) form a disordered region. Residues 1–248 (MNVQRPGLAV…YAGPQIFLPM (248 aa)) form an interaction with target proteins region. A compositionally biased stretch (low complexity) spans 22-48 (SEPGSPAAAARWVEASTEAEASAASSS). A compositionally biased stretch (basic and acidic residues) spans 58-67 (AEERPWEGRP). 5 LRR repeats span residues 104–125 (GLRR…LPGT), 126–144 (LLEL…DLPA), 145–166 (GLQR…LPAA), 167–186 (LEWL…MIPP), and 187–208 (ELIW…LLTQ). The segment at 249-256 (GPVELARR) is linker. The region spanning 257–546 (PLHEVVADWL…KVLRGRGLEL (290 aa)) is the NEL domain. The E3 ubiquitin-protein ligase catalytic domain stretch occupies residues 257-546 (PLHEVVADWL…KVLRGRGLEL (290 aa)). Catalysis depends on Cys-338, which acts as the Glycyl thioester intermediate.

The protein belongs to the LRR-containing bacterial E3 ligase family. Post-translationally, ubiquitinated in the presence of host E1 ubiquitin-activating enzyme, E2 ubiquitin-conjugating enzyme and ubiquitin.

The protein resides in the secreted. It is found in the host cytoplasm. Functionally, effector proteins function to alter host cell physiology and promote bacterial survival in host tissues. This protein is an E3 ubiquitin ligase that interferes with host's ubiquitination pathway. In Sinorhizobium fredii (strain NBRC 101917 / NGR234), this protein is Probable E3 ubiquitin-protein ligase NGR_a03640.